We begin with the raw amino-acid sequence, 42 residues long: MQDIKTYLSTAPVLAALSLGFLAGLLIEINRFFPDALIFPFF.

Residues 7 to 27 (YLSTAPVLAALSLGFLAGLLI) traverse the membrane as a helical segment.

It belongs to the PsaJ family.

It is found in the plastid. It localises to the chloroplast thylakoid membrane. In terms of biological role, may help in the organization of the PsaE and PsaF subunits. The polypeptide is Photosystem I reaction center subunit IX (Cryptomeria japonica (Japanese cedar)).